Reading from the N-terminus, the 130-residue chain is Small ribosomal subunit protein uS9 (130 aa).

It belongs to the universal ribosomal protein uS9 family.

The chain is Small ribosomal subunit protein uS9 from Xanthomonas oryzae pv. oryzae (strain MAFF 311018).